Consider the following 157-residue polypeptide: Transcription initiation factor IIA large subunit (157 aa).

It belongs to the TFIIA subunit 1 family. As to quaternary structure, TFIIA is a heterodimer of the large subunit and the small subunit gamma.

Its subcellular location is the nucleus. TFIIA is a component of the transcription machinery of RNA polymerase II and plays an important role in transcriptional activation. This chain is Transcription initiation factor IIA large subunit (TOA1), found in Encephalitozoon cuniculi (strain GB-M1) (Microsporidian parasite).